The sequence spans 317 residues: tRNA-cytidine(32) 2-sulfurtransferase (317 aa).

A PP-loop motif motif is present at residues 63-68 (SGGKDS). 3 residues coordinate [4Fe-4S] cluster: Cys-138, Cys-141, and Cys-229.

It belongs to the TtcA family. In terms of assembly, homodimer. Mg(2+) is required as a cofactor. It depends on [4Fe-4S] cluster as a cofactor.

The protein resides in the cytoplasm. It catalyses the reaction cytidine(32) in tRNA + S-sulfanyl-L-cysteinyl-[cysteine desulfurase] + AH2 + ATP = 2-thiocytidine(32) in tRNA + L-cysteinyl-[cysteine desulfurase] + A + AMP + diphosphate + H(+). The protein operates within tRNA modification. In terms of biological role, catalyzes the ATP-dependent 2-thiolation of cytidine in position 32 of tRNA, to form 2-thiocytidine (s(2)C32). The sulfur atoms are provided by the cysteine/cysteine desulfurase (IscS) system. The protein is tRNA-cytidine(32) 2-sulfurtransferase of Janthinobacterium sp. (strain Marseille) (Minibacterium massiliensis).